We begin with the raw amino-acid sequence, 676 residues long: Heat shock cognate HSP70 protein (676 aa).

Residues serine 613–glutamate 676 are disordered. Residues glycine 630 to glutamate 646 show a composition bias toward acidic residues.

It belongs to the heat shock protein 70 family.

The protein is Heat shock cognate HSP70 protein of Trypanosoma brucei brucei.